The primary structure comprises 429 residues: Histidine--tRNA ligase (429 aa).

Belongs to the class-II aminoacyl-tRNA synthetase family. Homodimer.

It is found in the cytoplasm. The catalysed reaction is tRNA(His) + L-histidine + ATP = L-histidyl-tRNA(His) + AMP + diphosphate + H(+). The sequence is that of Histidine--tRNA ligase from Pseudomonas putida (strain GB-1).